Here is a 688-residue protein sequence, read N- to C-terminus: Sialic acid-binding Ig-like lectin 10 (688 aa).

The N-terminal stretch at 1-17 (MSLLLFLLSFLLDGPQG) is a signal peptide. Over 18–543 (QMESYFLQVQ…DKDSATAFSK (526 aa)) the chain is Extracellular. Residues 26 to 138 (VQRIVKAQEG…SFKEEFRLQV (113 aa)) enclose the Ig-like V-type domain. Cystine bridges form between cysteine 37–cysteine 172, cysteine 42–cysteine 102, and cysteine 163–cysteine 214. Arginine 120 provides a ligand contact to N-acetylneuraminate. The Ig-like C2-type 1 domain occupies 145–228 (PDIFIPEVLE…SRMSTQRTVR (84 aa)). N-linked (GlcNAc...) asparagine glycans are attached at residues asparagine 195 and asparagine 246. Ig-like C2-type domains follow at residues 250-334 (PDLH…LDLS) and 339-436 (PQDL…LSLS). Cystine bridges form between cysteine 271-cysteine 318 and cysteine 375-cysteine 420. Residues 544–564 (GAVLGFGITALLALCLIVVIV) traverse the membrane as a helical segment. Topologically, residues 565 to 688 (KTLQKKGTQE…YSDYTEVRVH (124 aa)) are cytoplasmic. The ITIM motif 1 signature appears at 588-593 (LDYINV). The disordered stretch occupies residues 602 to 656 (RNWKAEPDAPSRSSPLDTHFPKPKKKQKDPHFTYPGCPDPTSSSQVPVSENNPEE). Residues 641–652 (PTSSSQVPVSEN) show a composition bias toward polar residues. Residues 657–662 (LHYAAL) carry the ITIM motif 2 motif. Tyrosine 659 is modified (phosphotyrosine).

It belongs to the immunoglobulin superfamily. SIGLEC (sialic acid binding Ig-like lectin) family. Interacts with PTPN6/SHP-1 upon phosphorylation. Interacts with NCF1. Interacts with CD24; the probable CD24:SIGLEC10 complex is proposed to inhibit HGMB1-mediated tissue damage immune response. Interacts with HMGB1; the interaction is dependent on CD24. Associates with membrane IgM on the B cell surface. Interacts with RIGI, CBL and PTPN11. In terms of processing, phosphorylation of Tyr-659 is involved in binding to PTPN6. Expressed in B cells with high levels in pre-B cells and B1a cells of the peritoneal cavity.

Its subcellular location is the cell membrane. Its function is as follows. Putative adhesion molecule that mediates sialic-acid dependent binding to cells. Preferentially binds to alpha-2,3- or alpha-2,6-linked sialic acid. The sialic acid recognition site may be masked by cis interactions with sialic acids on the same cell surface. In the immune response, seems to act as an inhibitory receptor upon ligand induced tyrosine phosphorylation by recruiting cytoplasmic phosphatase(s) via their SH2 domain(s) that block signal transduction through dephosphorylation of signaling molecules. Involved in negative regulation of B-cell antigen receptor signaling and specifically acts on B1 cells to inhibit Ca(2+) signaling, cellular expansion and antibody secretion. The inhibition of B cell activation is dependent on PTPN6/SHP-1. In association with CD24 may be involved in the selective suppression of the immune response to danger-associated molecular patterns (DAMPs) such as HMGB1, HSP70 and HSP90. In association with CD24 may regulate the immune repsonse of natural killer (NK) cells. Plays a role in the control of autoimmunity. During initiation of adaptive immune responses by CD8-alpha(+) dendritic cells inhibits cross-presentation by impairing the formation of MHC class I-peptide complexes. The function seems to implicate recruitment of PTPN6/SHP-1, which dephosphorylates NCF1 of the NADPH oxidase complex consequently promoting phagosomal acidification. In terms of biological role, (Microbial infection) During infection by RNA viruses inhibits RIG-I signaling in macrophages by promoting its CBL-dependent ubiquitination and degradation via PTPN11/SHP-2. This is Sialic acid-binding Ig-like lectin 10 (Siglec10) from Mus musculus (Mouse).